The chain runs to 65 residues: Large ribosomal subunit protein bL35 (65 aa).

This sequence belongs to the bacterial ribosomal protein bL35 family.

The polypeptide is Large ribosomal subunit protein bL35 (Thermotoga petrophila (strain ATCC BAA-488 / DSM 13995 / JCM 10881 / RKU-1)).